A 301-amino-acid chain; its full sequence is Putative dynamin-related protein 4A (301 aa).

In terms of domain architecture, Dynamin-type G spans 59 to 301; that stretch reads GIQLPTIVVV…LIDGDIVGIL (243 aa). The G1 motif stretch occupies residues 69–76; it reads GDQSSGKS. 69 to 76 is a binding site for GTP; sequence GDQSSGKS. The tract at residues 94–96 is G2 motif; that stretch reads CTR. The interval 168–171 is G3 motif; the sequence is DLPG. Residues 168-172 and 237-240 each bind GTP; these read DLPGI and TKAD. The tract at residues 237–240 is G4 motif; the sequence is TKAD. A region of interest (G5 motif) is located at residue Glu270.

This sequence belongs to the TRAFAC class dynamin-like GTPase superfamily. Dynamin/Fzo/YdjA family.

The sequence is that of Putative dynamin-related protein 4A (DRP4A) from Arabidopsis thaliana (Mouse-ear cress).